The chain runs to 117 residues: Minor capsid protein p17 (117 aa).

A glycan (N-linked (GlcNAc...) asparagine; by host) is linked at asparagine 12. The chain crosses the membrane as a helical span at residues 39 to 59; the sequence is AILLGILILLVIILIIVAIVY. Residues 96–117 form a disordered region; that stretch reads KNSTSQQSHIPSDEQLAELAHS. Asparagine 97 carries N-linked (GlcNAc...) asparagine; by host glycosylation.

This sequence belongs to the asfivirus minor capsid protein p17 family. As to quaternary structure, interacts with the minor capsid protein M1249L and with the hexon capsid protein p72 capsomers; these interactions form a rigid zipper structure that stabilizes the capsomers. Interacts with host STING1.

It is found in the virion membrane. The protein resides in the host endoplasmic reticulum membrane. Its function is as follows. Together with the penton and the other minor capsid proteins (M1249L, p49), forms a complicated network immediately below the outer capsid shell, stabilizing the whole capsid. Three copies of p17 encircle each p72 capsomer in the inner capsid shell, anchoring p72 capsomers on the inner membrane. Required for the assembly of the capsid and icosahedral morphogenesis. Additionally, inhibits the host cGAS-STING pathway through its interaction with STING1 and subsequent interference of the recruitment of downstream components TBK1 and IKBKE. The protein is Minor capsid protein p17 of African swine fever virus (isolate Warthog/Namibia/Wart80/1980) (ASFV).